Reading from the N-terminus, the 247-residue chain is Acidic 27 kDa endochitinase (247 aa).

A signal peptide spans 1-16 (MVLCCVFLLFLTGSFA). The active-site Proton donor is the Glu-84. Cys-206 and Cys-238 are oxidised to a cystine.

The protein belongs to the glycosyl hydrolase 19 family. Chitinase class II subfamily.

Its subcellular location is the secreted. The protein resides in the extracellular space. The catalysed reaction is Random endo-hydrolysis of N-acetyl-beta-D-glucosaminide (1-&gt;4)-beta-linkages in chitin and chitodextrins.. Defense against chitin-containing fungal pathogens. This chain is Acidic 27 kDa endochitinase (CHI17), found in Solanum lycopersicum (Tomato).